The following is a 477-amino-acid chain: Polyketide synthase-related protein Dhc1 (477 aa).

One can recognise a Carrier domain in the interval 34-112 (EKMTVREGEL…AMTHCVFDRA (79 aa)). Ser72 carries the O-(pantetheine 4'-phosphoryl)serine modification. The interval 161–322 (LTGATSFLGS…AGEVFLENLV (162 aa)) is ketoreductase (KR) domain. The interval 410–435 (VQQQQQQQQRQSQPPRDDAADGSPTE) is disordered. A compositionally biased stretch (low complexity) spans 411-422 (QQQQQQQQRQSQ). A compositionally biased stretch (basic and acidic residues) spans 424-435 (PRDDAADGSPTE).

The protein operates within mycotoxin biosynthesis. Functionally, polyketide synthase-related protein; part of the gene cluster that mediates the biosynthesis of 10,11-dehydrocurvularin, a prevalent fungal phytotoxin with heat shock response and immune-modulatory activities. The highly reducing polyketide synthase Dhc3 is responsible for biosynthesis up to the tetraketide stage. The non-reducing polyketide synthase Dhc5 then conducts four additional chain extension cycles, producing the unreduced part of the nascent octaketide from C-1 to C-8 in 10,11-dehydrocurvularin. The role of Dhc1 in 10,11-dehydrocurvularin biosynthesis has not been identified yet. The protein is Polyketide synthase-related protein Dhc1 of Alternaria cinerariae.